A 460-amino-acid polypeptide reads, in one-letter code: Bifunctional protein GlmU (460 aa).

Positions 1–232 are pyrophosphorylase; it reads MALNVVILAA…AIEVEGANNR (232 aa). UDP-N-acetyl-alpha-D-glucosamine contacts are provided by residues 8–11, Lys22, Gln73, 78–79, 100–102, Gly137, Glu157, Asn172, and Asn230; these read LAAG, GT, and YGD. Asp102 contacts Mg(2+). Asn230 contacts Mg(2+). The tract at residues 233–253 is linker; sequence VQLAQLERAYQAREAEKLMLA. The tract at residues 254–460 is N-acetyltransferase; that stretch reads GANLRDPSRI…GWQRPVKIKK (207 aa). UDP-N-acetyl-alpha-D-glucosamine-binding residues include Arg336 and Lys354. His366 functions as the Proton acceptor in the catalytic mechanism. Positions 369 and 380 each coordinate UDP-N-acetyl-alpha-D-glucosamine. Acetyl-CoA-binding positions include Ala383, 389 to 390, Ser408, Ala426, and Arg443; that span reads NY.

The protein in the N-terminal section; belongs to the N-acetylglucosamine-1-phosphate uridyltransferase family. This sequence in the C-terminal section; belongs to the transferase hexapeptide repeat family. As to quaternary structure, homotrimer. Mg(2+) is required as a cofactor.

Its subcellular location is the cytoplasm. The catalysed reaction is alpha-D-glucosamine 1-phosphate + acetyl-CoA = N-acetyl-alpha-D-glucosamine 1-phosphate + CoA + H(+). It catalyses the reaction N-acetyl-alpha-D-glucosamine 1-phosphate + UTP + H(+) = UDP-N-acetyl-alpha-D-glucosamine + diphosphate. Its pathway is nucleotide-sugar biosynthesis; UDP-N-acetyl-alpha-D-glucosamine biosynthesis; N-acetyl-alpha-D-glucosamine 1-phosphate from alpha-D-glucosamine 6-phosphate (route II): step 2/2. It functions in the pathway nucleotide-sugar biosynthesis; UDP-N-acetyl-alpha-D-glucosamine biosynthesis; UDP-N-acetyl-alpha-D-glucosamine from N-acetyl-alpha-D-glucosamine 1-phosphate: step 1/1. The protein operates within bacterial outer membrane biogenesis; LPS lipid A biosynthesis. In terms of biological role, catalyzes the last two sequential reactions in the de novo biosynthetic pathway for UDP-N-acetylglucosamine (UDP-GlcNAc). The C-terminal domain catalyzes the transfer of acetyl group from acetyl coenzyme A to glucosamine-1-phosphate (GlcN-1-P) to produce N-acetylglucosamine-1-phosphate (GlcNAc-1-P), which is converted into UDP-GlcNAc by the transfer of uridine 5-monophosphate (from uridine 5-triphosphate), a reaction catalyzed by the N-terminal domain. The protein is Bifunctional protein GlmU of Shewanella baltica (strain OS155 / ATCC BAA-1091).